We begin with the raw amino-acid sequence, 775 residues long: Subtilisin-like protease SBT3.8 (775 aa).

An N-terminal signal peptide occupies residues methionine 1–alanine 26. Positions glutamate 27–aspartate 109 are cleaved as a propeptide — activation peptide. Residues valine 30 to leucine 108 form the Inhibitor I9 domain. The 510-residue stretch at threonine 113–alanine 622 folds into the Peptidase S8 domain. Asparagine 129 carries an N-linked (GlcNAc...) asparagine glycan. Aspartate 143 serves as the catalytic Charge relay system. N-linked (GlcNAc...) asparagine glycans are attached at residues asparagine 174 and asparagine 202. Catalysis depends on histidine 218, which acts as the Charge relay system. The PA domain maps to serine 384 to leucine 476. N-linked (GlcNAc...) asparagine glycosylation is found at asparagine 395, asparagine 410, and asparagine 538. Serine 553 functions as the Charge relay system in the catalytic mechanism. 3 N-linked (GlcNAc...) asparagine glycosylation sites follow: asparagine 645, asparagine 721, and asparagine 756.

It belongs to the peptidase S8 family.

It localises to the secreted. This is Subtilisin-like protease SBT3.8 from Arabidopsis thaliana (Mouse-ear cress).